The sequence spans 466 residues: Cysteine--tRNA ligase (466 aa).

Cys29 is a binding site for Zn(2+). Positions 31–41 match the 'HIGH' region motif; that stretch reads PTVYNYIHIGN. Positions 209, 234, and 238 each coordinate Zn(2+). Residues 266–270 carry the 'KMSKS' region motif; sequence KMSKS. Residue Lys269 participates in ATP binding. Ser270 carries the post-translational modification Phosphoserine.

It belongs to the class-I aminoacyl-tRNA synthetase family. As to quaternary structure, monomer. Zn(2+) serves as cofactor.

It localises to the cytoplasm. The catalysed reaction is tRNA(Cys) + L-cysteine + ATP = L-cysteinyl-tRNA(Cys) + AMP + diphosphate. This is Cysteine--tRNA ligase from Bacillus velezensis (strain DSM 23117 / BGSC 10A6 / LMG 26770 / FZB42) (Bacillus amyloliquefaciens subsp. plantarum).